A 274-amino-acid chain; its full sequence is Triosephosphate isomerase (274 aa).

31-33 contacts substrate; that stretch reads NWK. H118 functions as the Electrophile in the catalytic mechanism. E188 (proton acceptor) is an active-site residue. Residues G194, S234, and 255 to 256 contribute to the substrate site; that span reads GG.

The protein belongs to the triosephosphate isomerase family. In terms of assembly, homodimer.

The protein localises to the cytoplasm. It carries out the reaction D-glyceraldehyde 3-phosphate = dihydroxyacetone phosphate. The protein operates within carbohydrate biosynthesis; gluconeogenesis. It functions in the pathway carbohydrate degradation; glycolysis; D-glyceraldehyde 3-phosphate from glycerone phosphate: step 1/1. In terms of biological role, involved in the gluconeogenesis. Catalyzes stereospecifically the conversion of dihydroxyacetone phosphate (DHAP) to D-glyceraldehyde-3-phosphate (G3P). In Chlamydia trachomatis serovar A (strain ATCC VR-571B / DSM 19440 / HAR-13), this protein is Triosephosphate isomerase.